A 211-amino-acid chain; its full sequence is uncharacterized protein (211 aa).

It belongs to the nucleoside deoxyribosyltransferase family.

The protein resides in the cytoplasm. The protein localises to the nucleus. This is an uncharacterized protein from Schizosaccharomyces pombe (strain 972 / ATCC 24843) (Fission yeast).